A 310-amino-acid polypeptide reads, in one-letter code: Putative F-box protein PP2-B2 (310 aa).

The interval 1–34 (MIQSTMGHKQSVDSRGKGRKVPGSSSMVQKHRVE) is disordered. The region spanning 44–90 (PSLFDNLPEDCISNIISFTSPRDACVAASVSKTFESAVNSDSVWDKF) is the F-box domain.

The chain is Putative F-box protein PP2-B2 (PP2B2) from Arabidopsis thaliana (Mouse-ear cress).